The following is a 471-amino-acid chain: Probable pyruvate, phosphate dikinase regulatory protein, chloroplastic (471 aa).

The N-terminal 49 residues, 1–49 (MSSSSSTSPRFGSMISAKLASPPPSLLLPPSPRLQGRRLTPPSCTPGTP), are a transit peptide targeting the chloroplast. The disordered stretch occupies residues 1–133 (MSSSSSTSPR…PHPSSDEAAS (133 aa)). Pro residues predominate over residues 21–32 (SPPPSLLLPPSP). Over residues 71-88 (GSATTPRSPAQLGSSQLH) the composition is skewed to polar residues. Positions 89–99 (RWSRARAHRSG) are enriched in basic residues. Basic and acidic residues predominate over residues 100-111 (RRLEWPTIRDRG). An ADP-binding site is contributed by 171 to 178 (HSVNAALG).

The protein belongs to the pyruvate, phosphate/water dikinase regulatory protein family. PDRP subfamily.

It localises to the plastid. Its subcellular location is the chloroplast. The catalysed reaction is N(tele)-phospho-L-histidyl/L-threonyl-[pyruvate, phosphate dikinase] + ADP = N(tele)-phospho-L-histidyl/O-phospho-L-threonyl-[pyruvate, phosphate dikinase] + AMP + H(+). The enzyme catalyses N(tele)-phospho-L-histidyl/O-phospho-L-threonyl-[pyruvate, phosphate dikinase] + phosphate + H(+) = N(tele)-phospho-L-histidyl/L-threonyl-[pyruvate, phosphate dikinase] + diphosphate. Its activity is regulated as follows. Regulated by light/dark exposure. Bifunctional serine/threonine kinase and phosphorylase involved in the dark/light-mediated regulation of PPDK by catalyzing its phosphorylation/dephosphorylation. Dark/light-induced changes in stromal concentrations of the competing ADP and Pi substrates govern the direction of the reaction. In the dark, phosphorylates the catalytic intermediate of PPDK (PPDK-HisP), inactivating it. Light exposure induces the phosphorolysis reaction that reactivates PPDK. This chain is Probable pyruvate, phosphate dikinase regulatory protein, chloroplastic (PDRP1), found in Oryza sativa subsp. indica (Rice).